A 287-amino-acid chain; its full sequence is Protein REVEILLE 3 (287 aa).

One can recognise an HTH myb-type domain in the interval 56 to 110 (TITKSRENWTEQEHDKFLEALHLFDRDWKKIKAFVGSKTVIQIRSHAQKYFLKVQ). The segment at residues 83–106 (WKKIKAFVGSKTVIQIRSHAQKYF) is a DNA-binding region (H-T-H motif). Positions 111–135 (KNGTKEHLPPPRPKRKANHPYPQKA) are disordered.

The protein localises to the nucleus. Probable transcription factor. The sequence is that of Protein REVEILLE 3 (RVE3) from Arabidopsis thaliana (Mouse-ear cress).